Here is a 206-residue protein sequence, read N- to C-terminus: Ribosomal RNA small subunit methyltransferase G (206 aa).

Residues G71, F76, A122–E123, and R135 contribute to the S-adenosyl-L-methionine site.

This sequence belongs to the methyltransferase superfamily. RNA methyltransferase RsmG family.

It is found in the cytoplasm. In terms of biological role, specifically methylates the N7 position of a guanine in 16S rRNA. In Bacteroides fragilis (strain ATCC 25285 / DSM 2151 / CCUG 4856 / JCM 11019 / LMG 10263 / NCTC 9343 / Onslow / VPI 2553 / EN-2), this protein is Ribosomal RNA small subunit methyltransferase G.